Here is a 98-residue protein sequence, read N- to C-terminus: NADH-ubiquinone oxidoreductase chain 4L (98 aa).

Transmembrane regions (helical) follow at residues 2–22, 29–49, and 61–81; these read PSIS…MLIF, SLLC…LTIL, and ILLL…LVTV.

It belongs to the complex I subunit 4L family. As to quaternary structure, core subunit of respiratory chain NADH dehydrogenase (Complex I) which is composed of 45 different subunits.

The protein localises to the mitochondrion inner membrane. It catalyses the reaction a ubiquinone + NADH + 5 H(+)(in) = a ubiquinol + NAD(+) + 4 H(+)(out). Functionally, core subunit of the mitochondrial membrane respiratory chain NADH dehydrogenase (Complex I) which catalyzes electron transfer from NADH through the respiratory chain, using ubiquinone as an electron acceptor. Part of the enzyme membrane arm which is embedded in the lipid bilayer and involved in proton translocation. This Eulemur coronatus (Crowned lemur) protein is NADH-ubiquinone oxidoreductase chain 4L (MT-ND4L).